Consider the following 638-residue polypeptide: Growth hormone receptor (638 aa).

The signal sequence occupies residues 1–18; it reads MDLWQLLLTLALAGSSDA. Residues 19–264 lie on the Extracellular side of the membrane; that stretch reads FSGSEPTAAI…NQFTCEEDFY (246 aa). Residue N46 is glycosylated (N-linked (GlcNAc...) asparagine). 2 cysteine pairs are disulfide-bonded: C56–C66 and C101–C112. N-linked (GlcNAc...) asparagine glycosylation occurs at N115. Residues C126 and C140 are joined by a disulfide bond. The Fibronectin type-III domain occupies 151 to 254; the sequence is PPIALNWTLL…EVLYVTLPQM (104 aa). N-linked (GlcNAc...) asparagine glycans are attached at residues N156, N161, and N200. The short motif at 240-244 is the WSXWS motif element; it reads YGEFS. Residues 265-288 traverse the membrane as a helical segment; the sequence is FPWLLIIIFGIFGLTVMLFVFLFS. The Cytoplasmic portion of the chain corresponds to 289–638; it reads KQQRIKMLIL…STDQLNKIMP (350 aa). A required for JAK2 binding region spans residues 294-379; the sequence is KMLILPPVPV…HQKSHSNLGV (86 aa). Positions 297–305 match the Box 1 motif motif; the sequence is ILPPVPVPK. A UbE motif motif is present at residues 340–349; that stretch reads DSWVEFIELD. The residue at position 341 (S341) is a Phosphoserine. The tract at residues 353-388 is disordered; it reads PDEKNEGSDTDRLLSSDHQKSHSNLGVKDGDSGRTS. Over residues 356-372 the composition is skewed to basic and acidic residues; that stretch reads KNEGSDTDRLLSSDHQK. Phosphotyrosine occurs at positions 487 and 595.

This sequence belongs to the type I cytokine receptor family. Type 1 subfamily. As to quaternary structure, on growth hormone (GH) binding, forms homodimers and binds JAK2 via a box 1-containing domain. Post-translationally, the soluble form (GHBP) is produced by phorbol ester-promoted proteolytic cleavage at the cell surface (shedding) by ADAM17/TACE. Shedding is inhibited by growth hormone (GH) binding to the receptor probably due to a conformational change in GHR rendering the receptor inaccessible to ADAM17. On GH binding, phosphorylated on tyrosine residues in the cytoplasmic domain by JAK2. In terms of processing, ubiquitinated by the ECS(SOCS2) complex following ligand-binding and phosphorylation by JAK2, leading to its degradation by the proteasome. Regulation by the ECS(SOCS2) complex acts as a negative feedback loop of growth hormone receptor signaling. Ubiquitination is not sufficient for GHR internalization.

It localises to the cell membrane. The protein localises to the secreted. Functionally, receptor for pituitary gland growth hormone (GH1) involved in regulating postnatal body growth. On ligand binding, couples to the JAK2/STAT5 pathway. The soluble form (GHBP) acts as a reservoir of growth hormone in plasma and may be a modulator/inhibitor of GH signaling. The polypeptide is Growth hormone receptor (GHR) (Macaca mulatta (Rhesus macaque)).